Reading from the N-terminus, the 305-residue chain is Ribosomal RNA small subunit methyltransferase H (305 aa).

Residues 47–49 (GGH), D66, F93, D108, and Q115 contribute to the S-adenosyl-L-methionine site. The disordered stretch occupies residues 280 to 305 (ASAEEQERNPRSRSAKLRIARKRSES). Over residues 290 to 305 (RSRSAKLRIARKRSES) the composition is skewed to basic residues.

This sequence belongs to the methyltransferase superfamily. RsmH family.

It localises to the cytoplasm. It carries out the reaction cytidine(1402) in 16S rRNA + S-adenosyl-L-methionine = N(4)-methylcytidine(1402) in 16S rRNA + S-adenosyl-L-homocysteine + H(+). Its function is as follows. Specifically methylates the N4 position of cytidine in position 1402 (C1402) of 16S rRNA. The sequence is that of Ribosomal RNA small subunit methyltransferase H from Synechococcus sp. (strain WH7803).